The sequence spans 601 residues: Probable cytochrome P450 525A1 (601 aa).

The chain crosses the membrane as a helical span at residues 12–32; that stretch reads ISYFLTCSIFGFILWILTEQI. Positions 205–253 are disordered; sequence NNNNNNNNNNNNNNNNNNNNNNNNNNNNNNNNNNNNNNNNNNNNNNNNN. Cys544 contributes to the heme binding site.

Belongs to the cytochrome P450 family. Heme is required as a cofactor.

Its subcellular location is the membrane. This Dictyostelium discoideum (Social amoeba) protein is Probable cytochrome P450 525A1 (cyp525A1).